A 187-amino-acid chain; its full sequence is Peptide deformylase (187 aa).

Residues Cys-94 and His-136 each coordinate Fe cation. Glu-137 is an active-site residue. A Fe cation-binding site is contributed by His-140.

Belongs to the polypeptide deformylase family. Requires Fe(2+) as cofactor.

The enzyme catalyses N-terminal N-formyl-L-methionyl-[peptide] + H2O = N-terminal L-methionyl-[peptide] + formate. Functionally, removes the formyl group from the N-terminal Met of newly synthesized proteins. Requires at least a dipeptide for an efficient rate of reaction. N-terminal L-methionine is a prerequisite for activity but the enzyme has broad specificity at other positions. The chain is Peptide deformylase from Chlorobaculum tepidum (strain ATCC 49652 / DSM 12025 / NBRC 103806 / TLS) (Chlorobium tepidum).